A 438-amino-acid polypeptide reads, in one-letter code: Trigger factor (438 aa).

One can recognise a PPIase FKBP-type domain in the interval 160–245 (DDKVTIDFVG…VKKIQQAELP (86 aa)).

Belongs to the FKBP-type PPIase family. Tig subfamily.

Its subcellular location is the cytoplasm. The catalysed reaction is [protein]-peptidylproline (omega=180) = [protein]-peptidylproline (omega=0). Its function is as follows. Involved in protein export. Acts as a chaperone by maintaining the newly synthesized protein in an open conformation. Functions as a peptidyl-prolyl cis-trans isomerase. This is Trigger factor from Francisella tularensis subsp. holarctica (strain LVS).